A 97-amino-acid polypeptide reads, in one-letter code: Small ribosomal subunit protein bS20 (97 aa).

This sequence belongs to the bacterial ribosomal protein bS20 family.

In terms of biological role, binds directly to 16S ribosomal RNA. The sequence is that of Small ribosomal subunit protein bS20 from Prochlorococcus marinus (strain MIT 9215).